A 281-amino-acid polypeptide reads, in one-letter code: Digeranylgeranylglyceryl phosphate synthase (281 aa).

Helical transmembrane passes span 7–27 (ILRP…ALIT), 32–52 (FSVL…NVIN), 72–91 (GRIS…ALAS), 95–117 (FYLG…YYAW), 128–148 (ITIS…LGEV), 193–213 (ISGV…PSLY), 214–234 (LLGI…AVFL), and 258–278 (VGMA…TALT).

This sequence belongs to the UbiA prenyltransferase family. DGGGP synthase subfamily. The cofactor is Mg(2+).

The protein resides in the cell membrane. The catalysed reaction is sn-3-O-(geranylgeranyl)glycerol 1-phosphate + (2E,6E,10E)-geranylgeranyl diphosphate = 2,3-bis-O-(geranylgeranyl)-sn-glycerol 1-phosphate + diphosphate. It participates in membrane lipid metabolism; glycerophospholipid metabolism. In terms of biological role, prenyltransferase that catalyzes the transfer of the geranylgeranyl moiety of geranylgeranyl diphosphate (GGPP) to the C2 hydroxyl of (S)-3-O-geranylgeranylglyceryl phosphate (GGGP). This reaction is the second ether-bond-formation step in the biosynthesis of archaeal membrane lipids. The protein is Digeranylgeranylglyceryl phosphate synthase of Methanothermobacter thermautotrophicus (strain ATCC 29096 / DSM 1053 / JCM 10044 / NBRC 100330 / Delta H) (Methanobacterium thermoautotrophicum).